The primary structure comprises 358 residues: ATP-dependent (S)-NAD(P)H-hydrate dehydratase (358 aa).

The region spanning 63 to 354 (LLQSAKNVIP…QQIHQAFEEL (292 aa)) is the YjeF C-terminal domain. (6S)-NADPHX-binding positions include Gly163 and 220 to 226 (NVVEFDR). ATP contacts are provided by residues 261 to 265 (KGQHD) and 280 to 289 (GSNRRCGGQG). Asp290 serves as a coordination point for (6S)-NADPHX.

The protein belongs to the NnrD/CARKD family. Mg(2+) is required as a cofactor.

It carries out the reaction (6S)-NADHX + ATP = ADP + phosphate + NADH + H(+). The enzyme catalyses (6S)-NADPHX + ATP = ADP + phosphate + NADPH + H(+). Catalyzes the dehydration of the S-form of NAD(P)HX at the expense of ATP, which is converted to ADP. Together with NAD(P)HX epimerase, which catalyzes the epimerization of the S- and R-forms, the enzyme allows the repair of both epimers of NAD(P)HX, a damaged form of NAD(P)H that is a result of enzymatic or heat-dependent hydration. The polypeptide is ATP-dependent (S)-NAD(P)H-hydrate dehydratase (Nematostella vectensis (Starlet sea anemone)).